Reading from the N-terminus, the 274-residue chain is 5'-nucleotidase SurE (274 aa).

Positions 12, 13, 45, and 103 each coordinate a divalent metal cation.

This sequence belongs to the SurE nucleotidase family. It depends on a divalent metal cation as a cofactor.

It localises to the cytoplasm. It carries out the reaction a ribonucleoside 5'-phosphate + H2O = a ribonucleoside + phosphate. Its function is as follows. Nucleotidase that shows phosphatase activity on nucleoside 5'-monophosphates. The protein is 5'-nucleotidase SurE of Chlamydia felis (strain Fe/C-56) (Chlamydophila felis).